The chain runs to 317 residues: Transaldolase (317 aa).

Lys-132 functions as the Schiff-base intermediate with substrate in the catalytic mechanism.

The protein belongs to the transaldolase family. Type 1 subfamily. As to quaternary structure, homodimer.

It is found in the cytoplasm. It carries out the reaction D-sedoheptulose 7-phosphate + D-glyceraldehyde 3-phosphate = D-erythrose 4-phosphate + beta-D-fructose 6-phosphate. It functions in the pathway carbohydrate degradation; pentose phosphate pathway; D-glyceraldehyde 3-phosphate and beta-D-fructose 6-phosphate from D-ribose 5-phosphate and D-xylulose 5-phosphate (non-oxidative stage): step 2/3. Functionally, transaldolase is important for the balance of metabolites in the pentose-phosphate pathway. The chain is Transaldolase from Photorhabdus laumondii subsp. laumondii (strain DSM 15139 / CIP 105565 / TT01) (Photorhabdus luminescens subsp. laumondii).